Reading from the N-terminus, the 671-residue chain is DNA ligase (671 aa).

Residues aspartate 32–aspartate 36, serine 81–leucine 82, and glutamate 113 each bind NAD(+). Lysine 115 acts as the N6-AMP-lysine intermediate in catalysis. Positions 136, 173, 290, and 314 each coordinate NAD(+). Zn(2+)-binding residues include cysteine 408, cysteine 411, cysteine 426, and cysteine 432. A BRCT domain is found at glutamate 593 to serine 671.

The protein belongs to the NAD-dependent DNA ligase family. LigA subfamily. It depends on Mg(2+) as a cofactor. Mn(2+) is required as a cofactor.

The catalysed reaction is NAD(+) + (deoxyribonucleotide)n-3'-hydroxyl + 5'-phospho-(deoxyribonucleotide)m = (deoxyribonucleotide)n+m + AMP + beta-nicotinamide D-nucleotide.. DNA ligase that catalyzes the formation of phosphodiester linkages between 5'-phosphoryl and 3'-hydroxyl groups in double-stranded DNA using NAD as a coenzyme and as the energy source for the reaction. It is essential for DNA replication and repair of damaged DNA. This is DNA ligase from Escherichia coli O81 (strain ED1a).